Here is a 496-residue protein sequence, read N- to C-terminus: L-arabinose isomerase (496 aa).

The Mn(2+) site is built by Glu302, Glu329, His346, and His445.

It belongs to the arabinose isomerase family. Requires Mn(2+) as cofactor.

It catalyses the reaction beta-L-arabinopyranose = L-ribulose. It participates in carbohydrate degradation; L-arabinose degradation via L-ribulose; D-xylulose 5-phosphate from L-arabinose (bacterial route): step 1/3. Functionally, catalyzes the conversion of L-arabinose to L-ribulose. This is L-arabinose isomerase from Thermotoga petrophila (strain ATCC BAA-488 / DSM 13995 / JCM 10881 / RKU-1).